Here is a 181-residue protein sequence, read N- to C-terminus: Cytochrome c-type biogenesis protein CcmE (181 aa).

The Cytoplasmic portion of the chain corresponds to 1–8; that stretch reads MNPRRKSR. Residues 9–29 form a helical; Signal-anchor for type II membrane protein membrane-spanning segment; it reads LKVVVLIMFSVAVAAGLTLYA. Residues 30–181 lie on the Periplasmic side of the membrane; the sequence is LSQNIDLFYT…TFNTLQGESK (152 aa). The heme site is built by His131 and Tyr135.

Belongs to the CcmE/CycJ family.

It localises to the cell inner membrane. In terms of biological role, heme chaperone required for the biogenesis of c-type cytochromes. Transiently binds heme delivered by CcmC and transfers the heme to apo-cytochromes in a process facilitated by CcmF and CcmH. The chain is Cytochrome c-type biogenesis protein CcmE from Haemophilus ducreyi (strain 35000HP / ATCC 700724).